The sequence spans 105 residues: Met repressor (105 aa).

Belongs to the MetJ family. As to quaternary structure, homodimer.

The protein localises to the cytoplasm. Its function is as follows. This regulatory protein, when combined with SAM (S-adenosylmethionine) represses the expression of the methionine regulon and of enzymes involved in SAM synthesis. The sequence is that of Met repressor from Serratia proteamaculans (strain 568).